A 957-amino-acid chain; its full sequence is Receptor-like protein 53 (957 aa).

The N-terminal stretch at 1–30 (MEGFWNSKSIIRITLSFIFLFICHFLDVLA) is a signal peptide. Residues 31 to 910 (APTRNLCRPE…EEEDEDLISW (880 aa)) are Extracellular-facing. Asparagine 78, asparagine 114, asparagine 143, asparagine 167, and asparagine 191 each carry an N-linked (GlcNAc...) asparagine glycan. 12 LRR repeats span residues 120-143 (LHFLTTLDLSFNDFKGQITSSIEN), 144-170 (LSHLTYLDLSSNHFSGQILNSIGNLSR), 172-192 (TYLNLFDNQFSGQAPSSICNL), 193-216 (SHLTFLDLSYNRFFGQFPSSIGGL), 217-240 (SHLTTLSLFSNKFSGQIPSSIGNL), 241-266 (SNLTTLDLSNNNFSGQIPSFIGNLSQ), 268-287 (TFLGLFSNNFVGEIPSSFGN), 288-312 (LNQLTRLYVDDNKLSGNFPNVLLNL), 313-336 (TGLSLLSLSNNKFTGTLPPNITSL), 338-360 (NLMDFDASDNAFTGTFPSFLFTI), 361-384 (PSLTYIRLNGNQLKGTLEFGNISS), and 386-409 (SNLYELDIGNNNFIGPIPSSISKL). N-linked (GlcNAc...) asparagine glycosylation is found at asparagine 239, asparagine 242, asparagine 252, and asparagine 263. Residues asparagine 311 and asparagine 332 are each glycosylated (N-linked (GlcNAc...) asparagine). Asparagine 381 carries N-linked (GlcNAc...) asparagine glycosylation. The stretch at 412-433 (LFRLDISHLNTQGPVDFSIFSH) is one LRR 13; degenerate repeat. LRR repeat units follow at residues 434–458 (LKSLLDLNISHLNTTTRIDLNYFLS), 460–483 (FKRLLLLDLSGNHVSATNKSSVSD), 486–509 (SQLIQSLYLSGCGITEFPEFVRTQ), 510–533 (HELGFLDISNNKIKGQVPDWLWRL), 535–556 (ILYYVNLSNNTLIGFQRPSKPE), 558–580 (SLLYLLGSNNNFIGKIPSFICGL), 581–604 (RSLNTLDLSDNNFNGSIPRCMGHL), 605–629 (KSTLSVLNLRQNHLSGGLPKQIFEI), 631–651 (RSLDVGHNQLVGKLPRSLSFF), 652–674 (STLEVLNVESNRINDTFPFWLSS), 675–697 (LPKLQVLVLRSNAFHGPIHEATF), 698–721 (PELRIIDISHNRFNGTLPTEYFVK), 765–789 (LTIYTAVDFSGNRFEGEIPKSIGLL), 790–813 (KELLVLSLSNNAFSGHMPSSMGNL), 814–837 (TALESLDVSKNKLTGEIPQELGDL), and 839–862 (FLAYMNFSHNQLAGLVPGGQQFLT). N-linked (GlcNAc...) asparagine glycosylation is found at asparagine 441, asparagine 446, and asparagine 477. Residues asparagine 540 and asparagine 543 are each glycosylated (N-linked (GlcNAc...) asparagine). Asparagine 594 is a glycosylation site (N-linked (GlcNAc...) asparagine). An N-linked (GlcNAc...) asparagine glycan is attached at asparagine 665. Residue asparagine 711 is glycosylated (N-linked (GlcNAc...) asparagine). Asparagine 812 carries an N-linked (GlcNAc...) asparagine glycan. N-linked (GlcNAc...) asparagine glycosylation is found at asparagine 844 and asparagine 864. A helical transmembrane segment spans residues 911–931 (IAAAIGFGPGIAFGLMFGYIL). Topologically, residues 932–957 (VSYKPEWFMNPFDRNNRRQKRHKTTH) are cytoplasmic.

This sequence belongs to the RLP family.

It is found in the cell membrane. The polypeptide is Receptor-like protein 53 (Arabidopsis thaliana (Mouse-ear cress)).